Consider the following 205-residue polypeptide: Methylthioribulose-1-phosphate dehydratase (205 aa).

C75 is a substrate binding site. Zn(2+) is bound by residues H93 and H95. E116 serves as the catalytic Proton donor/acceptor. Residue H171 coordinates Zn(2+).

The protein belongs to the aldolase class II family. MtnB subfamily. The cofactor is Zn(2+).

The protein resides in the cytoplasm. It carries out the reaction 5-(methylsulfanyl)-D-ribulose 1-phosphate = 5-methylsulfanyl-2,3-dioxopentyl phosphate + H2O. It functions in the pathway amino-acid biosynthesis; L-methionine biosynthesis via salvage pathway; L-methionine from S-methyl-5-thio-alpha-D-ribose 1-phosphate: step 2/6. Catalyzes the dehydration of methylthioribulose-1-phosphate (MTRu-1-P) into 2,3-diketo-5-methylthiopentyl-1-phosphate (DK-MTP-1-P). The protein is Methylthioribulose-1-phosphate dehydratase of Kluyveromyces lactis (strain ATCC 8585 / CBS 2359 / DSM 70799 / NBRC 1267 / NRRL Y-1140 / WM37) (Yeast).